Here is a 681-residue protein sequence, read N- to C-terminus: Fibulin-1 (681 aa).

The N-terminal stretch at 1-17 is a signal peptide; the sequence is MDLYMIVLLSLCGLLRA. Disulfide bonds link Cys29–Cys55, Cys30–Cys62, Cys43–Cys63, Cys72–Cys103, Cys85–Cys104, Cys106–Cys125, Cys107–Cys138, Cys114–Cys139, Cys162–Cys171, Cys167–Cys176, Cys178–Cys191, Cys197–Cys210, Cys204–Cys219, Cys225–Cys237, Cys243–Cys256, Cys250–Cys265, Cys271–Cys283, Cys289–Cys301, Cys317–Cys330, Cys336–Cys348, Cys343–Cys357, Cys359–Cys372, Cys378–Cys390, Cys386–Cys399, Cys401–Cys414, Cys420–Cys429, Cys440–Cys454, Cys460–Cys473, Cys469–Cys482, Cys484–Cys498, Cys504–Cys517, Cys511–Cys526, and Cys531–Cys553. 3 consecutive Anaphylatoxin-like domains span residues 29 to 63, 68 to 107, and 108 to 139; these read CCED…EQCC, EDSI…CECC, and LLGS…RSCC. Residues 158 to 192 form the EGF-like 1 domain; it reads TEDQCRAAGCAQRCLNGTCSCLDGFKLKTDGKHCE. Asn173 carries N-linked (GlcNAc...) asparagine glycosylation. Residues 193–238 form the EGF-like 2; calcium-binding domain; it reads DINECLLGPHHCVTGERCINTLGSYRCQREISCGTGYELTDNNKCK. An EGF-like 3; calcium-binding domain is found at 239-284; it reads DIDECDLGTHNCAAEMECQNTAGSFRCRPRMQCAAGFIQDALGSCI. The EGF-like 4; calcium-binding domain occupies 285–331; it reads DINECVSVTALSRGQMCFNTVGSFICQRHSVTCGRGYHLNAEGTRCV. One can recognise an EGF-like 5; calcium-binding domain in the interval 332–373; sequence DIDECAGPDNSCDGHGCINLVGSYRCECRTGFIFNSISRSCE. An EGF-like 6; calcium-binding domain is found at 374 to 415; that stretch reads DIDECRNYPGRLCAHKCENILGSYKCSCTAGFKLADDGRNCD. The EGF-like 7; calcium-binding domain maps to 416-455; sequence DVNECESSPCSQGCANVYGSYQSYCRRGYQLSDADGITCE. Residues 456-499 form the EGF-like 8; calcium-binding domain; that stretch reads DIDECALPTGGHICSYRCHNTPGSFHCTCPASGYTLAANGRSCQ. The 55-residue stretch at 500-554 folds into the EGF-like 9; calcium-binding domain; that stretch reads DIDECLTGTHSCSESESCFNIQGGFRCLSFDCPANYRRSGDTRPRVDRADIIRCV.

It belongs to the fibulin family. Homomultimerizes and interacts with various extracellular matrix components such as FN1, LAMA1, NID, AGC1 and CSPG2.

The protein localises to the secreted. It is found in the extracellular space. The protein resides in the extracellular matrix. Its function is as follows. Incorporated into fibronectin-containing matrix fibers. May play a role in cell adhesion and migration along protein fibers within the extracellular matrix (ECM). Could be important for certain developmental processes and contribute to the supramolecular organization of ECM architecture, in particular to those of basement membranes. In Danio rerio (Zebrafish), this protein is Fibulin-1 (fbln1).